The chain runs to 417 residues: Probable phosphoglycerate kinase (417 aa).

(2R)-3-phosphoglycerate-binding residues include valine 23, aspartate 24, phenylalanine 25, asparagine 26, glutamine 38, arginine 39, serine 62, histidine 63, glycine 65, arginine 66, leucine 121, arginine 122, histidine 169, and arginine 170. Glycine 213 is a binding site for ADP. Glycine 213 is a binding site for CDP. 2 residues coordinate AMP: alanine 214 and lysine 215. Alanine 214 contacts ATP. A Mg(2+)-binding site is contributed by alanine 214. Positions 217 and 218 each coordinate Mg(2+). Aspartate 218 provides a ligand contact to CDP. Lysine 219 serves as a coordination point for AMP. Lysine 219 is a binding site for ATP. Glycine 237 is a binding site for ADP. Glycine 237 provides a ligand contact to CDP. AMP contacts are provided by glycine 238 and glycine 312. Positions 238 and 312 each coordinate ATP. CDP is bound by residues glycine 337, alanine 339, and phenylalanine 342. Phenylalanine 342 lines the ADP pocket. Glutamate 343 serves as a coordination point for AMP. Residues glutamate 343, aspartate 374, and threonine 375 each contribute to the ATP site. Aspartate 374 provides a ligand contact to Mg(2+).

This sequence belongs to the phosphoglycerate kinase family. As to quaternary structure, monomer. The cofactor is Mg(2+).

It localises to the cytoplasm. It catalyses the reaction (2R)-3-phosphoglycerate + ATP = (2R)-3-phospho-glyceroyl phosphate + ADP. It participates in carbohydrate degradation; glycolysis; pyruvate from D-glyceraldehyde 3-phosphate: step 2/5. This is Probable phosphoglycerate kinase (pgk-1) from Caenorhabditis elegans.